Consider the following 560-residue polypeptide: (E)-beta-farnesene synthase (560 aa).

Residues Asp-312, Asp-316, Asp-457, and Glu-465 each contribute to the Mg(2+) site. A DDXXD motif motif is present at residues 312–316 (DDTFD).

Belongs to the terpene synthase family. Mg(2+) is required as a cofactor. Co(2+) serves as cofactor. The cofactor is Mn(2+).

The protein resides in the cytoplasm. The catalysed reaction is (2E,6E)-farnesyl diphosphate = (E)-beta-farnesene + diphosphate. It functions in the pathway secondary metabolite biosynthesis; terpenoid biosynthesis. In terms of biological role, sesquiterpene cyclase catalyzing the production of beta-farnesene from farnesyl diphosphate. This chain is (E)-beta-farnesene synthase, found in Citrus junos (Yuzu).